The following is a 300-amino-acid chain: UDP-N-acetylenolpyruvoylglucosamine reductase (300 aa).

Residues 28-193 (KTGGPADVLA…LQATFALEKG (166 aa)) enclose the FAD-binding PCMH-type domain. Residue Arg172 is part of the active site. Ser222 acts as the Proton donor in catalysis. Glu292 is a catalytic residue.

It belongs to the MurB family. FAD serves as cofactor.

Its subcellular location is the cytoplasm. The enzyme catalyses UDP-N-acetyl-alpha-D-muramate + NADP(+) = UDP-N-acetyl-3-O-(1-carboxyvinyl)-alpha-D-glucosamine + NADPH + H(+). It functions in the pathway cell wall biogenesis; peptidoglycan biosynthesis. In terms of biological role, cell wall formation. This is UDP-N-acetylenolpyruvoylglucosamine reductase from Enterococcus faecalis (strain ATCC 700802 / V583).